The following is a 156-amino-acid chain: Small ribosomal subunit protein uS7 (156 aa).

Belongs to the universal ribosomal protein uS7 family. As to quaternary structure, part of the 30S ribosomal subunit. Contacts proteins S9 and S11.

In terms of biological role, one of the primary rRNA binding proteins, it binds directly to 16S rRNA where it nucleates assembly of the head domain of the 30S subunit. Is located at the subunit interface close to the decoding center, probably blocks exit of the E-site tRNA. The sequence is that of Small ribosomal subunit protein uS7 from Campylobacter curvus (strain 525.92).